Consider the following 636-residue polypeptide: Bifunctional phosphonoacetaldehyde hydrolase/aminoethylphosphonate transaminase (636 aa).

Residues 1-276 (MKKIYGEKIK…IKSDFVPEND (276 aa)) form a phosphonoacetaldehyde hydrolase region. Asp-15 functions as the Nucleophile in the catalytic mechanism. Mg(2+) contacts are provided by Asp-15 and Ala-17. The active-site Schiff-base intermediate with substrate is Lys-56. Asp-189 lines the Mg(2+) pocket. The interval 277–636 (YILLTPGPLS…ADVIEKFINR (360 aa)) is 2-aminoethylphosphonate--pyruvate transaminase. Residue Lys-465 is modified to N6-(pyridoxal phosphate)lysine.

In the N-terminal section; belongs to the HAD-like hydrolase superfamily. PhnX family. It in the C-terminal section; belongs to the class-V pyridoxal-phosphate-dependent aminotransferase family. PhnW subfamily. Homodimer. Mg(2+) serves as cofactor. The cofactor is pyridoxal 5'-phosphate.

It catalyses the reaction (2-aminoethyl)phosphonate + pyruvate = phosphonoacetaldehyde + L-alanine. It carries out the reaction phosphonoacetaldehyde + H2O = acetaldehyde + phosphate + H(+). Involved in phosphonate degradation. The protein is Bifunctional phosphonoacetaldehyde hydrolase/aminoethylphosphonate transaminase (phnXW) of Clostridioides difficile (strain 630) (Peptoclostridium difficile).